The primary structure comprises 1062 residues: Suppressor of mar1-1 protein (1062 aa).

Over residues 1–17 the composition is skewed to polar residues; it reads MSENTTAPSDNITNEQR. Disordered regions lie at residues 1–27, 188–217, 267–337, 370–398, 595–634, and 681–804; these read MSEN…DDVD, ENSS…ASTS, TKQE…KKRT, SSKF…SATQ, EIST…QQEG, and SGEE…GNLG. Ser-2 bears the N-acetylserine mark. Residues 189–205 show a composition bias toward low complexity; that stretch reads NSSNNTSSQHNTSSSRR. Polar residues-rich tracts occupy residues 267–279, 287–298, and 305–323; these read TKQE…APSS, SLTSVPQRTNNE, and STAN…NNLI. Positions 325–335 are enriched in basic residues; the sequence is IKRKRGRPPKK. Composition is skewed to polar residues over residues 370–385 and 610–629; these read SSKF…NPVS and TKGS…GISD. Ser-378, Ser-379, Ser-628, and Ser-681 each carry phosphoserine. The span at 685–699 shows a compositional bias: basic and acidic residues; that stretch reads AITKENAEYERKTPG. A Phosphothreonine modification is found at Thr-697. Positions 704–716 are enriched in polar residues; it reads TTFVPLENSQPSD. Ser-712 bears the Phosphoserine; by ATM or ATR mark. Position 738 is a phosphoserine (Ser-738). Polar residues predominate over residues 781–793; it reads KGTSSIHNDTESA. Thr-817 carries the phosphothreonine modification.

As to quaternary structure, interacts with RFM1. This interaction is required to recruit HST1.

It is found in the nucleus. Functionally, DNA-binding protein that specifically binds the regulatory region of middle sporulation genes (MSE). Required for the repression of middle sporulation genes during vegetative growth. Represses expression via the recruitment of histone deacetylase HST1. This Saccharomyces cerevisiae (strain ATCC 204508 / S288c) (Baker's yeast) protein is Suppressor of mar1-1 protein (SUM1).